The chain runs to 942 residues: Serine/threonine-protein kinase ATG1 (942 aa).

The Protein kinase domain maps to 11-312 (YVVEKEIGKG…FEEFFNNKIV (302 aa)). Residues 17–25 (IGKGSFATV) and Lys-41 each bind ATP. Catalysis depends on Asp-159, which acts as the Proton acceptor. Residues 435–452 (NSSRVNKLDKSNLSGKSD) show a composition bias toward polar residues. Disordered regions lie at residues 435–454 (NSSR…SDSS), 505–529 (QPHN…SRRA), and 817–836 (NSKP…NDSN). The segment covering 515–529 (RAPSTTSGGTSSRRA) has biased composition (low complexity). Residues 819 to 834 (KPGTHNQSPKSKISND) are compositionally biased toward polar residues.

It belongs to the protein kinase superfamily. Ser/Thr protein kinase family. APG1/unc-51/ULK1 subfamily. In terms of assembly, homodimer. Forms a ternary complex with ATG13 and ATG17.

Its subcellular location is the cytoplasm. It is found in the preautophagosomal structure membrane. The enzyme catalyses L-seryl-[protein] + ATP = O-phospho-L-seryl-[protein] + ADP + H(+). It catalyses the reaction L-threonyl-[protein] + ATP = O-phospho-L-threonyl-[protein] + ADP + H(+). Its function is as follows. Serine/threonine protein kinase involved in the cytoplasm to vacuole transport (Cvt) and found to be essential in autophagy, where it is required for the formation of autophagosomes. Involved in the clearance of protein aggregates which cannot be efficiently cleared by the proteasome. Required for selective autophagic degradation of the nucleus (nucleophagy) as well as for mitophagy which contributes to regulate mitochondrial quantity and quality by eliminating the mitochondria to a basal level to fulfill cellular energy requirements and preventing excess ROS production. Also involved in endoplasmic reticulum-specific autophagic process, in selective removal of ER-associated degradation (ERAD) substrates. Plays a key role in ATG9 and ATG23 cycling through the pre-autophagosomal structure and is necessary to promote ATG18 binding to ATG9 through phosphorylation of ATG9. Catalyzes phosphorylation of ATG4, decreasing the interaction between ATG4 and ATG8 and impairing deconjugation of PE-conjugated forms of ATG8. Contributes to virulence by conferring resistance to unstable nutrient environments and immune defense of hosts. In Candida glabrata (strain ATCC 2001 / BCRC 20586 / JCM 3761 / NBRC 0622 / NRRL Y-65 / CBS 138) (Yeast), this protein is Serine/threonine-protein kinase ATG1.